A 428-amino-acid polypeptide reads, in one-letter code: Enolase (428 aa).

Q162 serves as a coordination point for (2R)-2-phosphoglycerate. E204 acts as the Proton donor in catalysis. Residues D241, E283, and D310 each contribute to the Mg(2+) site. Positions 335, 364, 365, and 386 each coordinate (2R)-2-phosphoglycerate. K335 serves as the catalytic Proton acceptor.

Belongs to the enolase family. It depends on Mg(2+) as a cofactor.

It is found in the cytoplasm. Its subcellular location is the secreted. The protein localises to the cell surface. The catalysed reaction is (2R)-2-phosphoglycerate = phosphoenolpyruvate + H2O. Its pathway is carbohydrate degradation; glycolysis; pyruvate from D-glyceraldehyde 3-phosphate: step 4/5. Functionally, catalyzes the reversible conversion of 2-phosphoglycerate (2-PG) into phosphoenolpyruvate (PEP). It is essential for the degradation of carbohydrates via glycolysis. The polypeptide is Enolase (Rhodococcus jostii (strain RHA1)).